Consider the following 431-residue polypeptide: Methionine aminopeptidase 2-2 (431 aa).

The segment at 1 to 76 (MAAQASEKLQ…PPRVPLSTLF (76 aa)) is disordered. Acidic residues predominate over residues 35 to 47 (EAEDDSDDDEVED). His184 is a substrate binding site. A divalent metal cation is bound by residues Asp204, Asp215, and His284. His292 contributes to the substrate binding site. Positions 317 and 412 each coordinate a divalent metal cation.

This sequence belongs to the peptidase M24A family. Methionine aminopeptidase eukaryotic type 2 subfamily. Requires Co(2+) as cofactor. Zn(2+) serves as cofactor. It depends on Mn(2+) as a cofactor. The cofactor is Fe(2+).

The protein localises to the cytoplasm. It catalyses the reaction Release of N-terminal amino acids, preferentially methionine, from peptides and arylamides.. In terms of biological role, cotranslationally removes the N-terminal methionine from nascent proteins. The N-terminal methionine is often cleaved when the second residue in the primary sequence is small and uncharged (Met-Ala-, Cys, Gly, Pro, Ser, Thr, or Val). In Aspergillus niger (strain ATCC MYA-4892 / CBS 513.88 / FGSC A1513), this protein is Methionine aminopeptidase 2-2.